A 296-amino-acid chain; its full sequence is LysM and putative peptidoglycan-binding domain-containing protein 4 (296 aa).

The Extracellular segment spans residues 1-217 (MRHEELLTKT…PMDGADCGIQ (217 aa)). The segment at 29–67 (KNGSGDSGDSSEEESHRVVLRPRGKERHKSGVHQPPQAG) is disordered. Asn-30 carries N-linked (GlcNAc...) asparagine glycosylation. A compositionally biased stretch (basic residues) spans 46–59 (VVLRPRGKERHKSG). A LysM domain is found at 74 to 118 (LQRELAQEDSLNKLALQYGCKVADIKKVNNFIREQDLYALKSVKI). A helical transmembrane segment spans residues 218–238 (WWNAVFIMLLIGIVLPVFYLV). Topologically, residues 239–296 (YFKIQASGETPNSLNTTVIPNGSMAMGTVPGQAPRLAVAVPAVTSADSQFSQTTQAGS) are cytoplasmic.

The protein resides in the membrane. The chain is LysM and putative peptidoglycan-binding domain-containing protein 4 (LYSMD4) from Homo sapiens (Human).